A 298-amino-acid polypeptide reads, in one-letter code: UDP-N-acetylenolpyruvoylglucosamine reductase (298 aa).

Residues 26 to 191 form the FAD-binding PCMH-type domain; the sequence is KTGGAADVFV…LDATFSLALE (166 aa). Residue arginine 170 is part of the active site. The active-site Proton donor is the serine 220. Glutamate 290 is a catalytic residue.

It belongs to the MurB family. FAD serves as cofactor.

It localises to the cytoplasm. It carries out the reaction UDP-N-acetyl-alpha-D-muramate + NADP(+) = UDP-N-acetyl-3-O-(1-carboxyvinyl)-alpha-D-glucosamine + NADPH + H(+). It participates in cell wall biogenesis; peptidoglycan biosynthesis. Functionally, cell wall formation. The polypeptide is UDP-N-acetylenolpyruvoylglucosamine reductase (Listeria monocytogenes serotype 4b (strain CLIP80459)).